Consider the following 270-residue polypeptide: 4-hydroxy-tetrahydrodipicolinate reductase (270 aa).

NAD(+)-binding positions include 11–16 (GASGRM) and Glu37. An NADP(+)-binding site is contributed by Arg38. NAD(+) contacts are provided by residues 101-103 (GTT) and 125-128 (APNM). His158 serves as the catalytic Proton donor/acceptor. (S)-2,3,4,5-tetrahydrodipicolinate is bound at residue His159. Lys162 (proton donor) is an active-site residue. 168–169 (GT) lines the (S)-2,3,4,5-tetrahydrodipicolinate pocket.

The protein belongs to the DapB family.

It localises to the cytoplasm. The enzyme catalyses (S)-2,3,4,5-tetrahydrodipicolinate + NAD(+) + H2O = (2S,4S)-4-hydroxy-2,3,4,5-tetrahydrodipicolinate + NADH + H(+). It catalyses the reaction (S)-2,3,4,5-tetrahydrodipicolinate + NADP(+) + H2O = (2S,4S)-4-hydroxy-2,3,4,5-tetrahydrodipicolinate + NADPH + H(+). It functions in the pathway amino-acid biosynthesis; L-lysine biosynthesis via DAP pathway; (S)-tetrahydrodipicolinate from L-aspartate: step 4/4. Its function is as follows. Catalyzes the conversion of 4-hydroxy-tetrahydrodipicolinate (HTPA) to tetrahydrodipicolinate. The polypeptide is 4-hydroxy-tetrahydrodipicolinate reductase (Shewanella amazonensis (strain ATCC BAA-1098 / SB2B)).